Consider the following 98-residue polypeptide: NADH-ubiquinone oxidoreductase chain 4L (98 aa).

3 helical membrane passes run 2-22 (PSISINITLAFTTALLGMLMF), 29-49 (SLLCLEGMMLSMFILSTLIIL), and 61-81 (ILLLVFAACEAAIGLALLVMI).

It belongs to the complex I subunit 4L family. As to quaternary structure, core subunit of respiratory chain NADH dehydrogenase (Complex I) which is composed of 45 different subunits.

Its subcellular location is the mitochondrion inner membrane. It carries out the reaction a ubiquinone + NADH + 5 H(+)(in) = a ubiquinol + NAD(+) + 4 H(+)(out). Functionally, core subunit of the mitochondrial membrane respiratory chain NADH dehydrogenase (Complex I) which catalyzes electron transfer from NADH through the respiratory chain, using ubiquinone as an electron acceptor. Part of the enzyme membrane arm which is embedded in the lipid bilayer and involved in proton translocation. The sequence is that of NADH-ubiquinone oxidoreductase chain 4L (MT-ND4L) from Mirza coquereli (Coquerel's giant mouse lemur).